Reading from the N-terminus, the 238-residue chain is MRPSGRAPDQMRAISIETGFTVHAEGSVLISFGDTRVLVTASVEEKVPPFLRGKGQGWVTAEYGMLPRATHTRGSREAAKGKQSGRTQEIQRLIGRSLRAVVDMAKLGERQIVIDCDVLQADGGTRTASISGGWVALRLAVDKLLASGAIAEDPITAQVAAISCGIHEGTPVLDLDYIEDSNAHADANFVLLDNGNIAEAQATAEGATYDEEALLRLLRLARIGCGEIFAAQRKATGR.

Phosphate-binding positions include arginine 86 and 124–126 (GTR).

The protein belongs to the RNase PH family. As to quaternary structure, homohexameric ring arranged as a trimer of dimers.

The catalysed reaction is tRNA(n+1) + phosphate = tRNA(n) + a ribonucleoside 5'-diphosphate. Functionally, phosphorolytic 3'-5' exoribonuclease that plays an important role in tRNA 3'-end maturation. Removes nucleotide residues following the 3'-CCA terminus of tRNAs; can also add nucleotides to the ends of RNA molecules by using nucleoside diphosphates as substrates, but this may not be physiologically important. Probably plays a role in initiation of 16S rRNA degradation (leading to ribosome degradation) during starvation. The protein is Ribonuclease PH of Rhizorhabdus wittichii (strain DSM 6014 / CCUG 31198 / JCM 15750 / NBRC 105917 / EY 4224 / RW1) (Sphingomonas wittichii).